The following is a 648-amino-acid chain: Dystrotelin (648 aa).

The ZZ-type zinc-finger motif lies at 223–279 (QHRVHCHACKAFPITGLRYRCLKCLNVHLCQSCFLTERRSRKHKPSHSVLEYCTQPS). Positions 228, 231, 243, 246, 252, 255, 265, and 269 each coordinate Zn(2+). The stretch at 367 to 446 (QRETAELQKD…LDTVRHLLSL (80 aa)) forms a coiled coil. The span at 455 to 474 (SHSNLQLEQDGSINENNWTQ) shows a compositional bias: polar residues. Disordered regions lie at residues 455 to 509 (SHSN…DTLY) and 536 to 557 (QREE…EGLP). The span at 479 to 502 (KPHESSSTEHEVEERGTRQERRFE) shows a compositional bias: basic and acidic residues. Residues 538–548 (EEEELQEEEEG) are compositionally biased toward acidic residues.

Its subcellular location is the cell membrane. The polypeptide is Dystrotelin (dytn) (Danio rerio (Zebrafish)).